Consider the following 149-residue polypeptide: Nucleoside diphosphate kinase (149 aa).

Positions 9, 57, 85, 91, 102, and 112 each coordinate ATP. The Pros-phosphohistidine intermediate role is filled by His-115.

The protein belongs to the NDK family. As to quaternary structure, homotetramer. It depends on Mg(2+) as a cofactor.

Its subcellular location is the cytoplasm. It carries out the reaction a 2'-deoxyribonucleoside 5'-diphosphate + ATP = a 2'-deoxyribonucleoside 5'-triphosphate + ADP. The enzyme catalyses a ribonucleoside 5'-diphosphate + ATP = a ribonucleoside 5'-triphosphate + ADP. Its function is as follows. Major role in the synthesis of nucleoside triphosphates other than ATP. The ATP gamma phosphate is transferred to the NDP beta phosphate via a ping-pong mechanism, using a phosphorylated active-site intermediate. This Gloeobacter violaceus (strain ATCC 29082 / PCC 7421) protein is Nucleoside diphosphate kinase.